Reading from the N-terminus, the 478-residue chain is Endoplasmic reticulum oxidoreductin-1 (478 aa).

The signal sequence occupies residues 1–20 (MREPLLQLIVLSLIIIVVNT). 6 disulfide bridges follow: cysteine 28–cysteine 41, cysteine 30–cysteine 39, cysteine 79–cysteine 384, cysteine 88–cysteine 93, cysteine 209–cysteine 230, and cysteine 387–cysteine 390. The segment at 117 to 143 (AAVKEEEDDDAEKCADAGNNIDPMDRT) is disordered. Residues arginine 188, threonine 190, and tryptophan 201 each contribute to the FAD site. Residues serine 241, histidine 244, arginine 283, and arginine 295 each coordinate FAD. N-linked (GlcNAc...) asparagine glycosylation occurs at asparagine 377. The tract at residues 459–478 (ESVMNTAADGPPRKSNKIDL) is disordered.

It belongs to the EROs family. In terms of assembly, may function both as a monomer and a homodimer. The cofactor is FAD.

The protein resides in the endoplasmic reticulum membrane. Functionally, oxidoreductase involved in disulfide bond formation in the endoplasmic reticulum. Efficiently reoxidizes pdi-1, the enzyme catalyzing protein disulfide formation, in order to allow pdi-1 to sustain additional rounds of disulfide formation. Following pdi reoxidation, passes its electrons to molecular oxygen via FAD, leading to the production of reactive oxygen species (ROS) in the cell. The polypeptide is Endoplasmic reticulum oxidoreductin-1 (ero-1) (Caenorhabditis elegans).